The chain runs to 335 residues: Teichoic acids export ATP-binding protein TagH (335 aa).

The ABC transporter domain maps to 26-246 (IKGLFMPKSQ…YDEFVKWFNK (221 aa)). 60 to 67 (GINGSGKS) provides a ligand contact to ATP.

This sequence belongs to the ABC transporter superfamily. Teichoic acids exporter (TC 3.A.1.104.1) family. In terms of assembly, the complex is composed of two ATP-binding proteins (TagH) and two transmembrane proteins (TagG).

It is found in the cell membrane. The enzyme catalyses ATP + H2O + teichoic acidSide 1 = ADP + phosphate + teichoic acidSide 2.. In terms of biological role, part of the ABC transporter complex TagGH involved in teichoic acids export. Responsible for energy coupling to the transport system. This Listeria innocua serovar 6a (strain ATCC BAA-680 / CLIP 11262) protein is Teichoic acids export ATP-binding protein TagH.